The primary structure comprises 202 residues: Dephospho-CoA kinase (202 aa).

The DPCK domain occupies F4–S202. Residue A12–T17 participates in ATP binding.

Belongs to the CoaE family.

It localises to the cytoplasm. The enzyme catalyses 3'-dephospho-CoA + ATP = ADP + CoA + H(+). It participates in cofactor biosynthesis; coenzyme A biosynthesis; CoA from (R)-pantothenate: step 5/5. Functionally, catalyzes the phosphorylation of the 3'-hydroxyl group of dephosphocoenzyme A to form coenzyme A. In Latilactobacillus sakei subsp. sakei (strain 23K) (Lactobacillus sakei subsp. sakei), this protein is Dephospho-CoA kinase.